The primary structure comprises 179 residues: Bifunctional protein PyrR (179 aa).

A PRPP-binding motif is present at residues 99 to 111; that stretch reads VILIDDVLYTGRT.

Belongs to the purine/pyrimidine phosphoribosyltransferase family. PyrR subfamily. In terms of assembly, homodimer and homohexamer; in equilibrium.

The catalysed reaction is UMP + diphosphate = 5-phospho-alpha-D-ribose 1-diphosphate + uracil. In terms of biological role, regulates transcriptional attenuation of the pyrimidine nucleotide (pyr) operon by binding in a uridine-dependent manner to specific sites on pyr mRNA. This disrupts an antiterminator hairpin in the RNA and favors formation of a downstream transcription terminator, leading to a reduced expression of downstream genes. Its function is as follows. Also displays a weak uracil phosphoribosyltransferase activity which is not physiologically significant. This Latilactobacillus sakei subsp. sakei (strain 23K) (Lactobacillus sakei subsp. sakei) protein is Bifunctional protein PyrR.